A 610-amino-acid polypeptide reads, in one-letter code: POU domain, class 6, transcription factor 1 (610 aa).

Positions 55–87 are disordered; it reads SSAGAAESGGDEEGSGQSLEATEEAQLDGPVTT. Positions 448–522 constitute a POU-specific domain; that stretch reads EEAINLEEIR…VLERWLAEAE (75 aa). A DNA-binding region (homeobox) is located at residues 543–602; the sequence is KRKRRTSFTPQAIEVLNTYFEKNSLPTGQEITEIAKELNYDREVVRVWFCNRRQTLKNTS.

It belongs to the POU transcription factor family. Class-6 subfamily. In terms of tissue distribution, ubiquitously expressed during embryogenesis.

The protein localises to the nucleus. Its function is as follows. Transcription factor that binds with high affinity to the motif 5'-TAATGARAT-3'. This chain is POU domain, class 6, transcription factor 1 (pou6f1), found in Danio rerio (Zebrafish).